Reading from the N-terminus, the 457-residue chain is Argininosuccinate lyase (457 aa).

The protein belongs to the lyase 1 family. Argininosuccinate lyase subfamily.

Its subcellular location is the cytoplasm. It carries out the reaction 2-(N(omega)-L-arginino)succinate = fumarate + L-arginine. The protein operates within amino-acid biosynthesis; L-arginine biosynthesis; L-arginine from L-ornithine and carbamoyl phosphate: step 3/3. The chain is Argininosuccinate lyase from Haemophilus influenzae (strain PittEE).